We begin with the raw amino-acid sequence, 284 residues long: L-ribulose-5-phosphate 3-epimerase UlaE (284 aa).

This sequence belongs to the L-ribulose-5-phosphate 3-epimerase family.

The catalysed reaction is L-ribulose 5-phosphate = L-xylulose 5-phosphate. Its pathway is cofactor degradation; L-ascorbate degradation; D-xylulose 5-phosphate from L-ascorbate: step 3/4. Its function is as follows. Catalyzes the isomerization of L-xylulose-5-phosphate to L-ribulose-5-phosphate. Is involved in the anaerobic L-ascorbate utilization. This Escherichia coli (strain 55989 / EAEC) protein is L-ribulose-5-phosphate 3-epimerase UlaE.